Reading from the N-terminus, the 458-residue chain is (R)-6-hydroxynicotine oxidase (458 aa).

The 172-residue stretch at 33–204 folds into the FAD-binding PCMH-type domain; the sequence is RHLQRPSLIA…TEVEVQLYEL (172 aa). Residues 67-73, 129-130, 134-137, G144, T195, N413, and N450 each bind FAD; these read RSGGHNP, HP, and FCGL. H71 carries the pros-8alpha-FAD histidine modification.

The protein belongs to the oxygen-dependent FAD-linked oxidoreductase family. In terms of assembly, monomer. Requires FAD as cofactor.

It is found in the cytoplasm. It carries out the reaction (R)-6-hydroxynicotine + O2 + H2O = 6-hydroxypseudooxynicotine + H2O2. It catalyses the reaction (R)-6-hydroxynicotine + O2 = 6-hydroxy-N-methylmyosmine + H2O2. It functions in the pathway alkaloid degradation; nicotine degradation; 6-hydroxypseudooxynicotine from nicotine (R-isomer route): step 2/2. Its activity is regulated as follows. Inhibited by (S)-6-hydroxynicotine. Inhibited by high concentrations of phenanthroline. In terms of biological role, involved in the degradation of D-nicotine. Catalyzes the oxidation of (R)-6-hydroxynicotine (6-hydroxy-D-nicotine) to 6-hydroxypseudooxynicotine. Oxidation of the pyrrolidine ring of (R)-6-hydroxynicotine leads to the formation of the optically inactive 6-hydroxy-N-methylmyosmine, which hydrolyzes spontaneously to 6-hydroxypseudooxynicotine. Acts with absolute stereospecificity on the D-form of 6-hydroxynicotine. Shows lower activity with (R)-6-hydroxynornicotine, and weak activity with (R)-4-(1-methylpyrrolidine-2-yl)phenol, (R)-6-chloronicotine and (R)-nicotine. This Paenarthrobacter nicotinovorans (Arthrobacter nicotinovorans) protein is (R)-6-hydroxynicotine oxidase.